A 74-amino-acid chain; its full sequence is Protein SMIM7 homolog (74 aa).

The chain crosses the membrane as a helical span at residues 53–73 (FRAFIGLWNIFIMFLMLVFFG).

It belongs to the SMIM7 family.

Its subcellular location is the membrane. In Ixodes scapularis (Black-legged tick), this protein is Protein SMIM7 homolog.